The primary structure comprises 353 residues: Peroxidase 34 (353 aa).

Positions 1–30 are cleaved as a signal peptide; the sequence is MHFSSSSTSSTWTILITLGCLMLHASLSAA. The residue at position 31 (Gln31) is a Pyrrolidone carboxylic acid. Cystine bridges form between Cys41/Cys121, Cys74/Cys79, Cys127/Cys331, and Cys207/Cys239. A glycan (N-linked (GlcNAc...) asparagine) is linked at Asn43. His72 serves as the catalytic Proton acceptor. Positions 73, 76, 78, 80, and 82 each coordinate Ca(2+). Asn87 carries N-linked (GlcNAc...) asparagine glycosylation. Pro169 contacts substrate. His200 contacts heme b. Thr201 is a binding site for Ca(2+). Residues Asn216, Asn228, and Asn244 are each glycosylated (N-linked (GlcNAc...) asparagine). Ca(2+) is bound by residues Asp252, Thr255, and Asp260. An N-linked (GlcNAc...) asparagine glycan is attached at Asn285.

This sequence belongs to the peroxidase family. Classical plant (class III) peroxidase subfamily. Heme b serves as cofactor. Ca(2+) is required as a cofactor. As to expression, preferentially expressed in roots, but also detected in flowers, leaves and stems.

It localises to the secreted. Its subcellular location is the vacuole. It carries out the reaction 2 a phenolic donor + H2O2 = 2 a phenolic radical donor + 2 H2O. Its function is as follows. Removal of H(2)O(2), oxidation of toxic reductants, biosynthesis and degradation of lignin, suberization, auxin catabolism, response to environmental stresses such as wounding, pathogen attack and oxidative stress. These functions might be dependent on each isozyme/isoform in each plant tissue. In terms of biological role, may be implicated in the systemic acquired resistance response via the salicylic acid signal transduction pathway. Exhibits a Ca(2+)-pectate binding affinity which could be interpreted in vivo as a specificity to interact with the pectic structure of the cell wall. The chain is Peroxidase 34 (PER34) from Arabidopsis thaliana (Mouse-ear cress).